A 1242-amino-acid chain; its full sequence is von Willebrand factor A domain-containing protein 5B2 (1242 aa).

One can recognise a VIT domain in the interval methionine 1 to arginine 138. One can recognise a VWFA domain in the interval glutamate 354–isoleucine 527. Disordered regions lie at residues serine 569 to alanine 650, cysteine 670 to proline 726, leucine 751 to leucine 794, cysteine 957 to aspartate 976, lysine 987 to histidine 1055, and glutamine 1118 to glycine 1159. Positions proline 588–threonine 604 are enriched in low complexity. Polar residues predominate over residues glycine 605 to leucine 619. The span at threonine 681–proline 700 shows a compositional bias: low complexity. Positions serine 1125 to glycine 1138 are enriched in low complexity.

In Homo sapiens (Human), this protein is von Willebrand factor A domain-containing protein 5B2 (VWA5B2).